A 275-amino-acid polypeptide reads, in one-letter code: 3-methyl-2-oxobutanoate hydroxymethyltransferase (275 aa).

Residues Asp-44 and Asp-83 each contribute to the Mg(2+) site. Residues 44–45 (DS), Asp-83, and Lys-113 contribute to the 3-methyl-2-oxobutanoate site. Position 115 (Glu-115) interacts with Mg(2+). Glu-182 serves as the catalytic Proton acceptor.

Belongs to the PanB family. In terms of assembly, homodecamer; pentamer of dimers. Requires Mg(2+) as cofactor.

It is found in the cytoplasm. The catalysed reaction is 3-methyl-2-oxobutanoate + (6R)-5,10-methylene-5,6,7,8-tetrahydrofolate + H2O = 2-dehydropantoate + (6S)-5,6,7,8-tetrahydrofolate. It participates in cofactor biosynthesis; (R)-pantothenate biosynthesis; (R)-pantoate from 3-methyl-2-oxobutanoate: step 1/2. Functionally, catalyzes the reversible reaction in which hydroxymethyl group from 5,10-methylenetetrahydrofolate is transferred onto alpha-ketoisovalerate to form ketopantoate. This is 3-methyl-2-oxobutanoate hydroxymethyltransferase from Clostridium botulinum (strain Kyoto / Type A2).